A 161-amino-acid polypeptide reads, in one-letter code: Pathogenesis-related protein 1 (161 aa).

The signal sequence occupies residues 1 to 26 (MNFTGYSRFLIVFVALVGALVLPSKA). Residues 34–149 (LRVHNQARGA…NGGTIISCNY (116 aa)) enclose the SCP domain. Cystine bridges form between Cys-70–Cys-138, Cys-113–Cys-117, and Cys-133–Cys-147.

Belongs to the CRISP family.

The protein resides in the secreted. The protein localises to the extracellular space. Its subcellular location is the apoplast. Its function is as follows. Partially responsible for acquired pathogen resistance. The polypeptide is Pathogenesis-related protein 1 (Arabidopsis thaliana (Mouse-ear cress)).